Reading from the N-terminus, the 987-residue chain is Ephrin type-B receptor 4 (987 aa).

An N-terminal signal peptide occupies residues 1–15; it reads MELRVLLCWASLAAA. Residues 16 to 539 lie on the Extracellular side of the membrane; it reads LEETLLNTKL…ESEGWREQLA (524 aa). Positions 17 to 202 constitute an Eph LBD domain; that stretch reads EETLLNTKLE…FYKKCAQLTV (186 aa). 2 disulfides stabilise this stretch: cysteine 61–cysteine 184 and cysteine 97–cysteine 107. Asparagine 203, asparagine 335, and asparagine 426 each carry an N-linked (GlcNAc...) asparagine glycan. Fibronectin type-III domains follow at residues 323 to 432 and 436 to 529; these read PPSA…TDRE and AVSD…TQLD. A helical transmembrane segment spans residues 540-560; it reads LIAGTAVVGVVLVLVVIVVAV. The Cytoplasmic portion of the chain corresponds to 561–987; sequence LCLRKQSNGR…GGTGGPAPQY (427 aa). One can recognise a Protein kinase domain in the interval 615 to 899; that stretch reads VKIEEVIGAG…ENGGASHPLL (285 aa). ATP contacts are provided by residues 621 to 629 and lysine 647; that span reads IGAGEFGEV. The active-site Proton acceptor is the aspartate 740. A phosphoserine mark is found at serine 769, serine 770, serine 911, and serine 943. The SAM domain maps to 907-971; the sequence is SAFGSVGEWL…LASVQHMKSQ (65 aa). Positions 965–987 are disordered; it reads VQHMKSQAKPGTPGGTGGPAPQY. Phosphothreonine is present on threonine 976. Over residues 976-987 the composition is skewed to gly residues; sequence TPGGTGGPAPQY. The PDZ-binding signature appears at 985–987; it reads PQY. Tyrosine 987 carries the post-translational modification Phosphotyrosine.

It belongs to the protein kinase superfamily. Tyr protein kinase family. Ephrin receptor subfamily. Heterotetramer upon binding of the ligand. The heterotetramer is composed of an ephrin dimer and a receptor dimer. Oligomerization is probably required to induce biological responses. Interacts with RASA1; the interaction depends on EPHB4 tyrosine-phosphorylation. In terms of processing, phosphorylated; autophosphorylation is stimulated by EFNB2. In terms of tissue distribution, abundantly expressed in placenta but also detected in kidney, liver, lung, pancreas, skeletal muscle and heart. Expressed in primitive and myeloid, but not lymphoid, hematopoietic cells. Also observed in cell lines derived from liver, breast, colon, lung, melanocyte and cervix.

It is found in the cell membrane. The enzyme catalyses L-tyrosyl-[protein] + ATP = O-phospho-L-tyrosyl-[protein] + ADP + H(+). In terms of biological role, receptor tyrosine kinase which binds promiscuously transmembrane ephrin-B family ligands residing on adjacent cells, leading to contact-dependent bidirectional signaling into neighboring cells. The signaling pathway downstream of the receptor is referred to as forward signaling while the signaling pathway downstream of the ephrin ligand is referred to as reverse signaling. Together with its cognate ligand/functional ligand EFNB2 it is involved in the regulation of cell adhesion and migration, and plays a central role in heart morphogenesis, angiogenesis and blood vessel remodeling and permeability. EPHB4-mediated forward signaling controls cellular repulsion and segregation from EFNB2-expressing cells. In Homo sapiens (Human), this protein is Ephrin type-B receptor 4 (EPHB4).